Here is a 717-residue protein sequence, read N- to C-terminus: F-box only protein 42 (717 aa).

The span at 1–30 shows a compositional bias: acidic residues; sequence MASSSDSEDDSFMAVDQEETVLEGTMEQDE. The tract at residues 1–47 is disordered; the sequence is MASSSDSEDDSFMAVDQEETVLEGTMEQDEEPHPVLEAEETRHNRSM. A compositionally biased stretch (basic and acidic residues) spans 31 to 43; the sequence is EPHPVLEAEETRH. An F-box domain is found at 44–93; the sequence is NRSMSELPEEVLEYILSFLSPYQEHKTAALVCKQWYRLIKGVAHQCYHGF. Kelch repeat units follow at residues 132–184, 186–242, 244–293, and 295–342; these read SMYV…VYKD, LVLF…VIDD, MIVF…VIDD, and TILI…LWCH. Disordered regions lie at residues 361 to 472 and 508 to 539; these read RAPL…SAAE and PASS…GVHT. The segment covering 363-376 has biased composition (low complexity); sequence PLSPSLNSRPSPIS. 2 positions are modified to phosphoserine: Ser365 and Ser373. Thr378 is modified (phosphothreonine). Composition is skewed to polar residues over residues 416 to 426 and 455 to 469; these read QRQTPSGSREG and SLDS…STPS. Ser552 bears the Phosphoserine mark. Residues 570 to 596 show a composition bias toward low complexity; the sequence is GPSASAALSPPLGSSPGSPGSQSLSSG. A disordered region spans residues 570–635; that stretch reads GPSASAALSP…PQSLNVGKPL (66 aa).

Component of some SCF complex, composed of CUL1, SKP1, RBX1 and FBXO42. Interacts (via the kelch domain) with p53/TP53; interaction is direct.

Substrate-recognition component of some SCF (SKP1-CUL1-F-box protein)-type E3 ubiquitin ligase complex. Specifically recognizes p53/TP53, promoting its ubiquitination and degradation. This chain is F-box only protein 42 (FBXO42), found in Pongo abelii (Sumatran orangutan).